We begin with the raw amino-acid sequence, 333 residues long: UDP-N-acetylglucosamine--N-acetylmuramyl-(pentapeptide) pyrophosphoryl-undecaprenol N-acetylglucosamine transferase (333 aa).

Residues 10–12, Asn124, Ser177, and Gln275 each bind UDP-N-acetyl-alpha-D-glucosamine; that span reads TGG.

Belongs to the glycosyltransferase 28 family. MurG subfamily.

The protein localises to the cell inner membrane. It carries out the reaction di-trans,octa-cis-undecaprenyl diphospho-N-acetyl-alpha-D-muramoyl-L-alanyl-D-glutamyl-meso-2,6-diaminopimeloyl-D-alanyl-D-alanine + UDP-N-acetyl-alpha-D-glucosamine = di-trans,octa-cis-undecaprenyl diphospho-[N-acetyl-alpha-D-glucosaminyl-(1-&gt;4)]-N-acetyl-alpha-D-muramoyl-L-alanyl-D-glutamyl-meso-2,6-diaminopimeloyl-D-alanyl-D-alanine + UDP + H(+). It functions in the pathway cell wall biogenesis; peptidoglycan biosynthesis. Functionally, cell wall formation. Catalyzes the transfer of a GlcNAc subunit on undecaprenyl-pyrophosphoryl-MurNAc-pentapeptide (lipid intermediate I) to form undecaprenyl-pyrophosphoryl-MurNAc-(pentapeptide)GlcNAc (lipid intermediate II). This is UDP-N-acetylglucosamine--N-acetylmuramyl-(pentapeptide) pyrophosphoryl-undecaprenol N-acetylglucosamine transferase from Nitratiruptor sp. (strain SB155-2).